A 118-amino-acid chain; its full sequence is Large ribosomal subunit protein uL18 (118 aa).

Residues M1–G24 form a disordered region. Basic residues predominate over residues I10–G20.

The protein belongs to the universal ribosomal protein uL18 family. Part of the 50S ribosomal subunit; part of the 5S rRNA/L5/L18/L25 subcomplex. Contacts the 5S and 23S rRNAs.

This is one of the proteins that bind and probably mediate the attachment of the 5S RNA into the large ribosomal subunit, where it forms part of the central protuberance. The chain is Large ribosomal subunit protein uL18 from Streptococcus mutans serotype c (strain ATCC 700610 / UA159).